The chain runs to 131 residues: Large ribosomal subunit protein uL18 (131 aa).

It belongs to the universal ribosomal protein uL18 family. Part of the 50S ribosomal subunit; part of the 5S rRNA/L5/L18/L25 subcomplex. Contacts the 5S and 23S rRNAs.

Functionally, this is one of the proteins that bind and probably mediate the attachment of the 5S RNA into the large ribosomal subunit, where it forms part of the central protuberance. This Corynebacterium kroppenstedtii (strain DSM 44385 / JCM 11950 / CIP 105744 / CCUG 35717) protein is Large ribosomal subunit protein uL18.